A 1030-amino-acid polypeptide reads, in one-letter code: uncharacterized protein (1030 aa).

An SWIM-type zinc finger spans residues 51-86 (IKVSFTAKDGELTCKCSCLANVDNCVHIVAVLLKYH). In terms of domain architecture, Helicase ATP-binding spans 590 to 751 (RGLEENKFGG…WSCFDFVLPS (162 aa)). 603 to 610 (DEMGLGKT) provides a ligand contact to ATP. The DEAQ box motif lies at 702–705 (DEAQ). One can recognise a Helicase C-terminal domain in the interval 867–1021 (ALEIIHEAIE…EDVNFFESLT (155 aa)).

Belongs to the SNF2/RAD54 helicase family.

This is an uncharacterized protein from Mycoplasma pneumoniae (strain ATCC 29342 / M129 / Subtype 1) (Mycoplasmoides pneumoniae).